The following is a 207-amino-acid chain: ATP-dependent Clp protease proteolytic subunit (207 aa).

Residue Ser-111 is the Nucleophile of the active site. His-136 is an active-site residue.

This sequence belongs to the peptidase S14 family. In terms of assembly, fourteen ClpP subunits assemble into 2 heptameric rings which stack back to back to give a disk-like structure with a central cavity, resembling the structure of eukaryotic proteasomes.

It is found in the cytoplasm. The enzyme catalyses Hydrolysis of proteins to small peptides in the presence of ATP and magnesium. alpha-casein is the usual test substrate. In the absence of ATP, only oligopeptides shorter than five residues are hydrolyzed (such as succinyl-Leu-Tyr-|-NHMec, and Leu-Tyr-Leu-|-Tyr-Trp, in which cleavage of the -Tyr-|-Leu- and -Tyr-|-Trp bonds also occurs).. Its function is as follows. Cleaves peptides in various proteins in a process that requires ATP hydrolysis. Has a chymotrypsin-like activity. Plays a major role in the degradation of misfolded proteins. The sequence is that of ATP-dependent Clp protease proteolytic subunit from Aliivibrio fischeri (strain ATCC 700601 / ES114) (Vibrio fischeri).